The sequence spans 101 residues: Diptericin-D (101 aa).

A signal peptide spans 1-18; it reads MKLFYLLVICALSLAVMA. 2 O-linked (GalNAc...) threonine glycosylation sites follow: threonine 28 and threonine 72. Phenylalanine 100 is modified (phenylalanine amide).

Belongs to the attacin/sarcotoxin-2 family.

In terms of biological role, has activity against E.coli. This chain is Diptericin-D, found in Protophormia terraenovae (Northern blowfly).